The sequence spans 816 residues: Oxysterol-binding protein-related protein 1D (816 aa).

The region spanning 92–229 (GAGVAGIMYK…WVEAFQVAKD (138 aa)) is the PH domain. The stretch at 290 to 321 (KHIILLDTLRQLETEKIELEATVVDETKEHDS) forms a coiled coil. Residues 340–362 (SASDSEADNESQDGADVESDEDD) form a disordered region. The span at 344-362 (SEADNESQDGADVESDEDD) shows a compositional bias: acidic residues. Residues 735–764 (NGEYESANAEKLRLEQLQRQARRLQEKGWK) are a coiled coil.

It belongs to the OSBP family. Expressed in roots, leaves, stems and flowers.

Functionally, may be involved in the transport of sterols. This chain is Oxysterol-binding protein-related protein 1D (ORP1D), found in Arabidopsis thaliana (Mouse-ear cress).